Consider the following 1155-residue polypeptide: Cilia- and flagella-associated protein 251 (1155 aa).

2 stretches are compositionally biased toward basic and acidic residues: residues 1 to 19 and 31 to 59; these read MSDA…GETE and KEVE…KTGE. 2 disordered regions span residues 1–144 and 167–225; these read MSDA…KLSL and LDQI…DIQS. A compositionally biased stretch (acidic residues) spans 60–69; the sequence is EEGEEEEEKE. Positions 70 to 95 are enriched in basic and acidic residues; that stretch reads EEGKKDKKIVMEETEEKAGESQEKEA. Over residues 99-111 the composition is skewed to low complexity; sequence QEETTVEPQEVTE. Composition is skewed to polar residues over residues 118–128 and 172–182; these read TQITDSQSVTS and PEEQQISSPER. Basic and acidic residues predominate over residues 201 to 220; it reads GQERRDLEPENREEGQERTV. WD repeat units follow at residues 341–383, 391–431, 442–481, 499–534, 537–597, 601–641, 647–684, 694–730, 737–780, 791–831, 837–883, 889–927, 965–1005, and 1025–1065; these read PVHT…IWKW, ACTL…AWYE, LLTE…VWDI, PCKL…FYDH, SIVN…VYHL, GTKL…VWNY, LFSR…ILDA, PFKY…MLVV, WEYL…GYDL, LDIH…LFNA, RKTL…ILPV, KTSA…QWKI, YFYY…FYPS, and GKLI…GYTN.

It localises to the cytoplasm. The protein localises to the cytoskeleton. It is found in the cilium axoneme. Its subcellular location is the cell projection. The protein resides in the cilium. It localises to the flagellum. Involved in spermatozoa motility. May also regulate cilium motility through its role in the assembly of the axonemal radial spokes. The sequence is that of Cilia- and flagella-associated protein 251 from Pongo abelii (Sumatran orangutan).